The primary structure comprises 522 residues: Zinc finger and BTB domain-containing protein 18 (522 aa).

The BTB domain maps to 24-91 (CDCTVLVGDA…MYEGKLQFKD (68 aa)). Positions 121-143 (ATTEADSTKKEEDASSCSDKVES) are enriched in basic and acidic residues. Positions 121 to 165 (ATTEADSTKKEEDASSCSDKVESLSDGSSHMAGDLPSDEDEGEDE) are disordered. At S157 the chain carries Phosphoserine. K273 participates in a covalent cross-link: Glycyl lysine isopeptide (Lys-Gly) (interchain with G-Cter in SUMO2). The interaction with DNMT3A stretch occupies residues 310–427 (EPAHLAPLRE…TFSCMYTLKR (118 aa)). C2H2-type zinc fingers lie at residues 370–392 (FMCPLCNKVFPSPHILQIHLSTH), 410–432 (PTCSLCGKTFSCMYTLKRHERTH), 438–460 (YTCTQCGKSFQYSHNLSRHAVVH), and 466–489 (HACKWCERRFTQSGDLYRHIRKFH). S516 and S517 each carry phosphoserine.

The protein belongs to the krueppel C2H2-type zinc-finger protein family. ZBTB18 subfamily. In terms of assembly, interacts with DNMT3A.

It localises to the nucleus. Its function is as follows. Transcriptional repressor that plays a role in various developmental processes such as myogenesis and brain development. Specifically binds the consensus DNA sequence 5'-[AC]ACATCTG[GT][AC]-3' which contains the E box core, and acts by recruiting chromatin remodeling multiprotein complexes. Plays a key role in myogenesis by directly repressing the expression of ID2 and ID3, 2 inhibitors of skeletal myogenesis. Also involved in controlling cell division of progenitor cells and regulating the survival of postmitotic cortical neurons. May also play a role in the organization of chromosomes in the nucleus. This is Zinc finger and BTB domain-containing protein 18 (ZBTB18) from Bos taurus (Bovine).